A 382-amino-acid polypeptide reads, in one-letter code: Neuropeptide Y receptor type 1 (382 aa).

Topologically, residues 1-33 are extracellular; it reads MNSTLFSKVENHSIHYNASENSPLLAFENDDCH. Residues N2, N11, and N17 are each glycosylated (N-linked (GlcNAc...) asparagine). Residues 34–54 form a helical membrane-spanning segment; it reads LPLAVIFTLALAYGAVIILGV. The Cytoplasmic portion of the chain corresponds to 55–75; it reads SGNLALIIIILKQKEMRNVTN. A helical transmembrane segment spans residues 76 to 96; it reads ILIVNLSFSDLLVAVMCLPFT. The Extracellular segment spans residues 97–115; sequence FVYTLMDHWVFGETMCKLN. Cysteines 112 and 197 form a disulfide. The chain crosses the membrane as a helical span at residues 116 to 136; that stretch reads PFVQCVSITVSIFSLVLIAVE. At 137–153 the chain is on the cytoplasmic side; sequence RHQLIINPRGWRPNNRH. A helical transmembrane segment spans residues 154–174; sequence AYIGITVIWVLAVASSLPFVI. Residues 175–210 lie on the Extracellular side of the membrane; the sequence is YQILTDEPFQNVSLAAFKDKYVCFDKFPSDSHRLSY. Residues 211–231 traverse the membrane as a helical segment; that stretch reads TTLLLVLQYFGPLCFIFICYF. Over 232-259 the chain is Cytoplasmic; it reads KIYIRLKRRNNMMDKIRDSKYRSSETKR. Residues 260-280 traverse the membrane as a helical segment; that stretch reads INIMLLSIVVAFAVCWLPLTI. Residues 281-298 are Extracellular-facing; the sequence is FNTVFDWNHQIIATCNHN. The chain crosses the membrane as a helical span at residues 299 to 319; it reads LLFLLCHLTAMISTCVNPIFY. Residues 320–382 lie on the Cytoplasmic side of the membrane; it reads GFLNKNFQRD…KISMNDNEKV (63 aa). C337 carries the S-palmitoyl cysteine lipid modification. 2 positions are modified to phosphoserine: S367 and S375.

It belongs to the G-protein coupled receptor 1 family. In terms of tissue distribution, the alpha form is highly expressed in the brain, heart, kidney, spleen, skeletal muscle, and lung, whereas the beta receptor mRNA was not detected in these tissues. However, the beta form is expressed in mouse embryonic developmental stage (7 and 11 days), bone marrow cells and several hematopoietic cell lines.

The protein localises to the cell membrane. In terms of biological role, receptor for neuropeptide Y and peptide YY. This chain is Neuropeptide Y receptor type 1 (Npy1r), found in Mus musculus (Mouse).